A 573-amino-acid chain; its full sequence is WRKY transcription factor SUSIBA2 (573 aa).

Disordered stretches follow at residues 56 to 133 (AHPD…CSRE) and 157 to 192 (PAEVGTSEPQQMNSSDNAMQEPQSENVADKSADDGY). A compositionally biased stretch (basic and acidic residues) spans 64–85 (PRDKSVRNAHEDRGSRDFEFKP). Positions 108-122 (MQNQSMNPSSSSSNM) are enriched in low complexity. The span at 163–182 (SEPQQMNSSDNAMQEPQSEN) shows a compositional bias: polar residues. Over residues 183-192 (VADKSADDGY) the composition is skewed to basic and acidic residues. Positions 183 to 247 (VADKSADDGY…YKGRHNHPKP (65 aa)) form a DNA-binding region, WRKY 1. Positions 214, 219, 242, and 244 each coordinate Zn(2+). The disordered stretch occupies residues 240–332 (GRHNHPKPQP…EDLESKRRKM (93 aa)). The segment covering 263 to 277 (GEERYDGASAADDKS) has biased composition (basic and acidic residues). The segment at residues 357–422 (SEVDILDDGY…YEGKHNHEVP (66 aa)) is a DNA-binding region (WRKY 2). Zn(2+) contacts are provided by Cys388, Cys393, His417, and His419.

The protein belongs to the WRKY group I family. Expressed in endosperm, but not in leaves.

It is found in the nucleus. Its function is as follows. Transcription factor involved in starch synthesis. Acts as a transcriptional activator in sugar signaling. Interacts specifically with the SURE and W-box elements, but not with the SP8a element. In Hordeum vulgare (Barley), this protein is WRKY transcription factor SUSIBA2.